We begin with the raw amino-acid sequence, 534 residues long: Endoglucanase 5 (534 aa).

The signal sequence occupies residues 1–27 (MSDVSGRFVVAAAVVAVSLAMAAAAAA). The Nucleophile role is filled by D82. Residues H432, D484, and E493 contribute to the active site. Residues 515 to 534 (RRRGEDAPPSSTSPVAEDDL) form a disordered region.

This sequence belongs to the glycosyl hydrolase 9 (cellulase E) family.

It is found in the secreted. The catalysed reaction is Endohydrolysis of (1-&gt;4)-beta-D-glucosidic linkages in cellulose, lichenin and cereal beta-D-glucans.. The protein is Endoglucanase 5 of Oryza sativa subsp. japonica (Rice).